We begin with the raw amino-acid sequence, 582 residues long: 2-succinyl-5-enolpyruvyl-6-hydroxy-3-cyclohexene-1-carboxylate synthase (582 aa).

This sequence belongs to the TPP enzyme family. MenD subfamily. In terms of assembly, homodimer. Mg(2+) is required as a cofactor. It depends on Mn(2+) as a cofactor. Requires thiamine diphosphate as cofactor.

It catalyses the reaction isochorismate + 2-oxoglutarate + H(+) = 5-enolpyruvoyl-6-hydroxy-2-succinyl-cyclohex-3-ene-1-carboxylate + CO2. It participates in quinol/quinone metabolism; 1,4-dihydroxy-2-naphthoate biosynthesis; 1,4-dihydroxy-2-naphthoate from chorismate: step 2/7. It functions in the pathway quinol/quinone metabolism; menaquinone biosynthesis. In terms of biological role, catalyzes the thiamine diphosphate-dependent decarboxylation of 2-oxoglutarate and the subsequent addition of the resulting succinic semialdehyde-thiamine pyrophosphate anion to isochorismate to yield 2-succinyl-5-enolpyruvyl-6-hydroxy-3-cyclohexene-1-carboxylate (SEPHCHC). This Chlorobaculum tepidum (strain ATCC 49652 / DSM 12025 / NBRC 103806 / TLS) (Chlorobium tepidum) protein is 2-succinyl-5-enolpyruvyl-6-hydroxy-3-cyclohexene-1-carboxylate synthase.